Here is a 245-residue protein sequence, read N- to C-terminus: tRNA pseudouridine synthase A (245 aa).

The active-site Nucleophile is the Asp-52. Tyr-111 provides a ligand contact to substrate.

It belongs to the tRNA pseudouridine synthase TruA family. In terms of assembly, homodimer.

It catalyses the reaction uridine(38/39/40) in tRNA = pseudouridine(38/39/40) in tRNA. Functionally, formation of pseudouridine at positions 38, 39 and 40 in the anticodon stem and loop of transfer RNAs. In Rickettsia canadensis (strain McKiel), this protein is tRNA pseudouridine synthase A.